A 177-amino-acid chain; its full sequence is ATP synthase subunit delta (177 aa).

It belongs to the ATPase delta chain family. In terms of assembly, F-type ATPases have 2 components, F(1) - the catalytic core - and F(0) - the membrane proton channel. F(1) has five subunits: alpha(3), beta(3), gamma(1), delta(1), epsilon(1). F(0) has three main subunits: a(1), b(2) and c(10-14). The alpha and beta chains form an alternating ring which encloses part of the gamma chain. F(1) is attached to F(0) by a central stalk formed by the gamma and epsilon chains, while a peripheral stalk is formed by the delta and b chains.

It is found in the cell inner membrane. In terms of biological role, f(1)F(0) ATP synthase produces ATP from ADP in the presence of a proton or sodium gradient. F-type ATPases consist of two structural domains, F(1) containing the extramembraneous catalytic core and F(0) containing the membrane proton channel, linked together by a central stalk and a peripheral stalk. During catalysis, ATP synthesis in the catalytic domain of F(1) is coupled via a rotary mechanism of the central stalk subunits to proton translocation. Its function is as follows. This protein is part of the stalk that links CF(0) to CF(1). It either transmits conformational changes from CF(0) to CF(1) or is implicated in proton conduction. The polypeptide is ATP synthase subunit delta (Shewanella piezotolerans (strain WP3 / JCM 13877)).